The sequence spans 118 residues: Large ribosomal subunit protein bL20 (118 aa).

It belongs to the bacterial ribosomal protein bL20 family.

Functionally, binds directly to 23S ribosomal RNA and is necessary for the in vitro assembly process of the 50S ribosomal subunit. It is not involved in the protein synthesizing functions of that subunit. This Parvibaculum lavamentivorans (strain DS-1 / DSM 13023 / NCIMB 13966) protein is Large ribosomal subunit protein bL20.